Here is a 505-residue protein sequence, read N- to C-terminus: GMP synthase [glutamine-hydrolyzing] (505 aa).

In terms of domain architecture, Glutamine amidotransferase type-1 spans 2 to 190; it reads SVVILDFGSQ…FLEICGVARD (189 aa). Catalysis depends on C79, which acts as the Nucleophile. Catalysis depends on residues H165 and E167. The 190-residue stretch at 191–380 folds into the GMPS ATP-PPase domain; sequence WNAEHIVDEL…LGLPDAIRMR (190 aa). 218 to 224 contributes to the ATP binding site; that stretch reads SGGVDSS.

Homodimer.

It carries out the reaction XMP + L-glutamine + ATP + H2O = GMP + L-glutamate + AMP + diphosphate + 2 H(+). Its pathway is purine metabolism; GMP biosynthesis; GMP from XMP (L-Gln route): step 1/1. In terms of biological role, catalyzes the synthesis of GMP from XMP. The protein is GMP synthase [glutamine-hydrolyzing] of Deinococcus geothermalis (strain DSM 11300 / CIP 105573 / AG-3a).